The chain runs to 258 residues: NAD-dependent protein deacylase (258 aa).

A Deacetylase sirtuin-type domain is found at Glu-3–Ala-258. Residue Gly-28 to Trp-48 coordinates NAD(+). Substrate-binding residues include Tyr-73 and Arg-76. Gln-109–Asp-112 serves as a coordination point for NAD(+). The active-site Proton acceptor is His-127. The Zn(2+) site is built by Cys-135, Cys-138, Cys-161, and Cys-164. Residues Gly-201 to Ser-203 and Ala-245 each bind NAD(+).

It belongs to the sirtuin family. Class III subfamily. Zn(2+) serves as cofactor.

It is found in the cytoplasm. It carries out the reaction N(6)-acetyl-L-lysyl-[protein] + NAD(+) + H2O = 2''-O-acetyl-ADP-D-ribose + nicotinamide + L-lysyl-[protein]. The catalysed reaction is N(6)-succinyl-L-lysyl-[protein] + NAD(+) + H2O = 2''-O-succinyl-ADP-D-ribose + nicotinamide + L-lysyl-[protein]. Functionally, NAD-dependent lysine deacetylase and desuccinylase that specifically removes acetyl and succinyl groups on target proteins. Modulates the activities of several proteins which are inactive in their acylated form. The protein is NAD-dependent protein deacylase of Corynebacterium glutamicum (strain ATCC 13032 / DSM 20300 / JCM 1318 / BCRC 11384 / CCUG 27702 / LMG 3730 / NBRC 12168 / NCIMB 10025 / NRRL B-2784 / 534).